The chain runs to 343 residues: MTVVNLAYIPSPPQGVWHLGPIPIRAYALCIIAGIVAALIIGDRRWEQRGGERGVIYDIALWAVPFGLVGGRLYHVMTDWQTYFGAHGKGIGKAIAVWEGGLGIWGAVALGGVGAWIACRRRGIPLPAFADAIAPGIVLAQAIGRLGNYFNQELTGGPTTLPWGLELFYRRSADGTVDVLNLNGVSTGEVAQVVHPTFLYELLWNVLVFVLLIVVDRRFKIGHGRLFAMYVAAYCVGRFCVELMRVDPATQFGGIRVNSFTSTLVFVGAVAYILLAPKGREDPATLGGTPSSADGGDDTAETEATADTEDTEDTEDGVTDAPEADATDKSVDESADNSGIVEK.

Transmembrane regions (helical) follow at residues 22–42 (IPIRAYALCIIAGIVAALIIG), 54–74 (GVIYDIALWAVPFGLVGGRLY), 97–117 (VWEGGLGIWGAVALGGVGAWI), and 123–143 (GIPLPAFADAIAPGIVLAQAI). Arginine 145 lines the a 1,2-diacyl-sn-glycero-3-phospho-(1'-sn-glycerol) pocket. Helical transmembrane passes span 193 to 213 (VVHPTFLYELLWNVLVFVLLI) and 257 to 277 (VNSFTSTLVFVGAVAYILLAP). The segment at 283-343 (PATLGGTPSS…SADNSGIVEK (61 aa)) is disordered. Residues 295–325 (GGDDTAETEATADTEDTEDTEDGVTDAPEAD) are compositionally biased toward acidic residues.

This sequence belongs to the Lgt family.

Its subcellular location is the cell membrane. The catalysed reaction is L-cysteinyl-[prolipoprotein] + a 1,2-diacyl-sn-glycero-3-phospho-(1'-sn-glycerol) = an S-1,2-diacyl-sn-glyceryl-L-cysteinyl-[prolipoprotein] + sn-glycerol 1-phosphate + H(+). Its pathway is protein modification; lipoprotein biosynthesis (diacylglyceryl transfer). Catalyzes the transfer of the diacylglyceryl group from phosphatidylglycerol to the sulfhydryl group of the N-terminal cysteine of a prolipoprotein, the first step in the formation of mature lipoproteins. The chain is Phosphatidylglycerol--prolipoprotein diacylglyceryl transferase from Mycobacteroides abscessus (strain ATCC 19977 / DSM 44196 / CCUG 20993 / CIP 104536 / JCM 13569 / NCTC 13031 / TMC 1543 / L948) (Mycobacterium abscessus).